The primary structure comprises 227 residues: Sensory transduction protein RegX3 (227 aa).

The Response regulatory domain occupies Ser3–Leu116. The residue at position 52 (Asp52) is a 4-aspartylphosphate. The segment at residues Asp128–Gly227 is a DNA-binding region (ompR/PhoB-type).

In terms of processing, phosphorylated by SenX3.

Functionally, member of the two-component regulatory system SenX3/RegX3. Specifically binds to the promoter region of the senX3-regX3 operon. This Mycobacterium bovis (strain ATCC BAA-935 / AF2122/97) protein is Sensory transduction protein RegX3.